A 56-amino-acid polypeptide reads, in one-letter code: Large ribosomal subunit protein bL32 (56 aa).

Positions 1–27 (MAVQQNKKSRSRRDMRRSHDALTTAAV) are disordered. Over residues 7–16 (KKSRSRRDMR) the composition is skewed to basic residues.

Belongs to the bacterial ribosomal protein bL32 family.

The protein is Large ribosomal subunit protein bL32 of Actinobacillus pleuropneumoniae serotype 7 (strain AP76).